Consider the following 263-residue polypeptide: Esterase mokD (263 aa).

Catalysis depends on charge relay system residues Ser-134, Asp-208, and His-236.

Belongs to the LovG family.

The catalysed reaction is dihydromonacolin L-[lovastatin nonaketide synthase] + H2O = holo-[lovastatin nonaketide synthase] + dihydromonacolin L carboxylate + H(+). The protein operates within polyketide biosynthesis; lovastatin biosynthesis. Its function is as follows. Esterase; part of the gene cluster that mediates the biosynthesis of monakolin K, also known as lovastatin, and which acts as a potent competitive inhibitor of HMG-CoA reductase. Monakolin K biosynthesis is performed in two stages. The first stage is catalyzed by the nonaketide synthase mokA, which belongs to type I polyketide synthases and catalyzes the iterative nine-step formation of the polyketide. This PKS stage completed by the action of dehydrogenase mokE, which catalyzes the NADPH-dependent reduction of the unsaturated tetra-, penta- and heptaketide intermediates that arise during the mokA-mediated biosynthesis of the nonaketide chain and leads to dihydromonacolin L. Covalently bound dihydromonacolin L is released from mokA by the mokD esterase. Conversion of dihydromonacolin L into monacolin L and then monacolin J is subsequently performed with the participation of molecular oxygen and P450 monoogygenase mokC. Finally, mokF performs the conversion of monacoline J to monacoline K through the addition of the side-chain diketide moiety (2R)-2-methylbutanoate produced by the diketide synthase mokB. The polypeptide is Esterase mokD (Monascus pilosus (Red mold)).